We begin with the raw amino-acid sequence, 323 residues long: MAGRSELVVSFGEMLIDFVPTVAGVSLAEAPAFVKAPGGAPANVAIAVARLGGGAAFVGKLGDDEFGRMLAAILRDNGVDDGGVVFDAGARTALAFVTLRADGEREFMFYRNPSADMLLTHAELNVELIKRAAVFHYGSISLIAEPCRSAHLRAMEIAKEAGALLSYDPNLREALWPSREEARTKILSIWDQADIVKVSEVELEFLTGIDSVEDDVVMKLWRPTMKLLLVTLGDQGCKYYARDFRGAVPSYKVQQVDTTGAGDAFVGALLRRIVQDPSSLQDQKKLEEAIKFANACGAITATKKGAIPSLPTEVEVLKLMESA.

It belongs to the carbohydrate kinase PfkB family. Expressed in root, endosperm and leaf tissues.

The enzyme catalyses D-fructose + ATP = D-fructose 6-phosphate + ADP + H(+). It participates in glycan biosynthesis; starch biosynthesis. Its activity is regulated as follows. Completely inhibited at 50 mM ATP, but not inhibited at high fructose concentration. Its function is as follows. Fructokinase that may play an important role in maintaining the flux of carbon towards starch formation. May also be involved in a sugar-sensing pathway. The chain is Fructokinase-1 from Oryza sativa subsp. japonica (Rice).